The chain runs to 323 residues: MAAPPHILFAGTPVFAAIILRRLLEAKYHIGAVYTQPDRPSGRGRRPTPSPVKDIAITHQLPLYQPATLKDKGSQAQLAALAPDLMVVAAYGLILPATVLQIPPLGCINVHASLLPRWRGAAPIQRALLAGDKVTGISIMQMDAGLDTGPVVHTARYPIHPKDTAATVHDQLAELGAEALLQCLPSLLEKKANIATLQDESQACYAPKIRKEEAWLDWSQPAVLLERQVRAFNPWPVAQTQIGGKTLRVWSAAALAQTANALPGTLLAVHKTGIDVATGNGTLRLLEVQLAGKRVMTVQDYLNAHTLTPGIVLVKNPGKAKSP.

113–116 (SLLP) lines the (6S)-5,6,7,8-tetrahydrofolate pocket.

Belongs to the Fmt family.

The enzyme catalyses L-methionyl-tRNA(fMet) + (6R)-10-formyltetrahydrofolate = N-formyl-L-methionyl-tRNA(fMet) + (6S)-5,6,7,8-tetrahydrofolate + H(+). Its function is as follows. Attaches a formyl group to the free amino group of methionyl-tRNA(fMet). The formyl group appears to play a dual role in the initiator identity of N-formylmethionyl-tRNA by promoting its recognition by IF2 and preventing the misappropriation of this tRNA by the elongation apparatus. The polypeptide is Methionyl-tRNA formyltransferase (Nitrosococcus oceani (strain ATCC 19707 / BCRC 17464 / JCM 30415 / NCIMB 11848 / C-107)).